Here is a 219-residue protein sequence, read N- to C-terminus: MEPSFWHEKWQLQQIGFHQNQVNPFLVKYWSHIGLNENTEVFVPLCGKSLDMFYLAEQRHTVLGCELNTLAVEQFFTDNGLTYQVNHTDEHVVFSTDQVTLYQGDIFTLPKSATASISGFYDRAALIAWPEEMRQQYVKALAALIPANVSGLLITLDYLQETLKGPPFAVSPRWVESYLTPYFDVELLECVDVLADNPRFMNKHVPWLNEAVYKLTRKS.

S-adenosyl-L-methionine-binding residues include tryptophan 10, leucine 45, glutamate 66, and arginine 123.

Belongs to the class I-like SAM-binding methyltransferase superfamily. TPMT family.

It is found in the cytoplasm. The catalysed reaction is S-adenosyl-L-methionine + a thiopurine = S-adenosyl-L-homocysteine + a thiopurine S-methylether.. The sequence is that of Thiopurine S-methyltransferase from Shewanella frigidimarina (strain NCIMB 400).